The sequence spans 75 residues: Defensin-like protein (75 aa).

The first 24 residues, 1-24 (MEKKSIAGLCFLFLVLFVAQEVVV), serve as a signal peptide directing secretion. 4 cysteine pairs are disulfide-bonded: C31–C75, C42–C63, C48–C69, and C52–C71.

This sequence belongs to the DEFL family.

It is found in the secreted. Its function is as follows. This protein is required for germination. The polypeptide is Defensin-like protein (Vigna unguiculata (Cowpea)).